Consider the following 136-residue polypeptide: MPTIQQLIRSERQELKKKTKSPALKSCPQRRGVCTRVYTTTPKKPNSALRKVARVRLTSGFEVTAYIPGIGHNLQEHSVVMIRGGRVKDLPGVRYHIIRGTLDTAGVKDRKQGRSKYGAKRPKPGAASTASTGKKR.

The interval 1-28 (MPTIQQLIRSERQELKKKTKSPALKSCP) is disordered. Asp89 is modified (3-methylthioaspartic acid). The segment at 101–136 (TLDTAGVKDRKQGRSKYGAKRPKPGAASTASTGKKR) is disordered. Residues 113-123 (GRSKYGAKRPK) show a composition bias toward basic residues.

This sequence belongs to the universal ribosomal protein uS12 family. Part of the 30S ribosomal subunit. Contacts proteins S8 and S17. May interact with IF1 in the 30S initiation complex.

Functionally, with S4 and S5 plays an important role in translational accuracy. In terms of biological role, interacts with and stabilizes bases of the 16S rRNA that are involved in tRNA selection in the A site and with the mRNA backbone. Located at the interface of the 30S and 50S subunits, it traverses the body of the 30S subunit contacting proteins on the other side and probably holding the rRNA structure together. The combined cluster of proteins S8, S12 and S17 appears to hold together the shoulder and platform of the 30S subunit. This is Small ribosomal subunit protein uS12 from Cyanothece sp. (strain PCC 7425 / ATCC 29141).